Here is a 179-residue protein sequence, read N- to C-terminus: Natural killer cells antigen CD94 (179 aa).

The Cytoplasmic segment spans residues 1-10; sequence MAVFKTTLWR. Residues 11-31 form a helical; Signal-anchor for type II membrane protein membrane-spanning segment; the sequence is LISGTLGIICLSLMATLGILL. Residues 32–179 are Extracellular-facing; it reads KNSFTKLSIE…NRYICKQQLI (148 aa). Disulfide bonds link C58–C70 and C61–C72. Residues 68 to 175 enclose the C-type lectin domain; that stretch reads YRCNCYFISS…CEDKNRYICK (108 aa). N-linked (GlcNAc...) asparagine glycosylation is found at N83 and N132. Intrachain disulfides connect C89–C174 and C152–C166.

As to quaternary structure, can form disulfide-bonded heterodimer with NKG2 family members KLRC1 and KLRC2. KLRD1-KLRC1 heterodimer interacts with peptide-bound MHC-E-B2M heterotrimeric complex. KLRD1 plays a prominent role in directly interacting with MHC-E. KLRD1-KLRC1 interacts with much higher affinity with peptide-bound MHC-E-B2M than KLRD1-KLRC2. Interacts with the adapter protein TYROBP/DAP12; this interaction is required for cell surface expression and cell activation. In terms of tissue distribution, natural killer cells.

It is found in the cell membrane. Immune receptor involved in self-nonself discrimination. In complex with KLRC1 or KLRC2 on cytotoxic and regulatory lymphocyte subsets, recognizes non-classical major histocompatibility (MHC) class Ib molecule MHC-E loaded with self-peptides derived from the signal sequence of classical MHC class Ia and non-classical MHC class Ib molecules. Enables cytotoxic cells to monitor the expression of MHC class I molecules in healthy cells and to tolerate self. Primarily functions as a ligand binding subunit as it lacks the capacity to signal. Functionally, KLRD1-KLRC1 acts as an immune inhibitory receptor. Key inhibitory receptor on natural killer (NK) cells that regulates their activation and effector functions. Dominantly counteracts T cell receptor signaling on a subset of memory/effector CD8-positive T cells as part of an antigen-driven response to avoid autoimmunity. On intraepithelial CD8-positive gamma-delta regulatory T cells triggers TGFB1 secretion, which in turn limits the cytotoxic programming of intraepithelial CD8-positive alpha-beta T cells, distinguishing harmless from pathogenic antigens. In MHC-E-rich tumor microenvironment, acts as an immune inhibitory checkpoint and may contribute to progressive loss of effector functions of NK cells and tumor-specific T cells, a state known as cell exhaustion. Upon MHC-E-peptide binding, transmits intracellular signals through KLRC1 immunoreceptor tyrosine-based inhibition motifs (ITIMs) by recruiting INPP5D/SHIP-1 and INPPL1/SHIP-2 tyrosine phosphatases to ITIMs, and ultimately opposing signals transmitted by activating receptors through dephosphorylation of proximal signaling molecules. Its function is as follows. KLRD1-KLRC2 acts as an immune activating receptor. On cytotoxic lymphocyte subsets recognizes MHC-E loaded with signal sequence-derived peptides from non-classical MHC class Ib MHC-G molecules, likely playing a role in the generation and effector functions of adaptive NK cells and in maternal-fetal tolerance during pregnancy. Regulates the effector functions of terminally differentiated cytotoxic lymphocyte subsets, and in particular may play a role in adaptive NK cell response to viral infection. Upon MHC-E-peptide binding, transmits intracellular signals via the adapter protein TYROBP/DAP12, triggering the phosphorylation of proximal signaling molecules and cell activation. The sequence is that of Natural killer cells antigen CD94 (KLRD1) from Pan troglodytes (Chimpanzee).